The sequence spans 393 residues: Aspartate aminotransferase (393 aa).

Positions 38, 124, and 174 each coordinate L-aspartate. Lys-237 is modified (N6-(pyridoxal phosphate)lysine).

This sequence belongs to the class-I pyridoxal-phosphate-dependent aminotransferase family. As to quaternary structure, homodimer. It depends on pyridoxal 5'-phosphate as a cofactor.

It localises to the cytoplasm. The catalysed reaction is L-aspartate + 2-oxoglutarate = oxaloacetate + L-glutamate. This Geobacillus stearothermophilus (Bacillus stearothermophilus) protein is Aspartate aminotransferase (aspC).